The chain runs to 380 residues: Cyclohex-1-ene-1-carbonyl-CoA dehydrogenase (380 aa).

Asp-91 (proton acceptor) is an active-site residue. Residues Leu-122, Ala-124, Thr-125, Ser-131, and Thr-157 each contribute to the FAD site. Ser-131 contacts cyclohex-1-ene-1-carbonyl-CoA. Ser-131 contributes to the cyclohexa-1,5-diene-1-carbonyl-CoA binding site. Lys-178, Arg-242, and Thr-363 together coordinate cyclohex-1-ene-1-carbonyl-CoA. 3 residues coordinate cyclohexa-1,5-diene-1-carbonyl-CoA: Lys-178, Arg-242, and Thr-363. 2 residues coordinate FAD: Thr-365 and Gln-367. Cyclohex-1-ene-1-carbonyl-CoA is bound at residue Arg-375. Arg-375 contacts cyclohexa-1,5-diene-1-carbonyl-CoA.

It belongs to the acyl-CoA dehydrogenase family. As to quaternary structure, homotetramer. FAD is required as a cofactor.

It carries out the reaction cyclohex-1-ene-1-carbonyl-CoA + oxidized [electron-transfer flavoprotein] + H(+) = cyclohexa-1,5-diene-1-carbonyl-CoA + reduced [electron-transfer flavoprotein]. In terms of biological role, acyl-CoA dehydrogenase involved in the anaerobic degradation of cyclohexane carboxylic acid (CHC). Catalyzes the 1,4-dehydrogenation at C3 and C6 of cyclohex-1-ene-1-carbonyl-CoA (CHeneCoA or Ch1CoA) to cyclohexa-1,5-diene-1-carbonyl-CoA (CHdieneCoA or Ch1,5CoA). Also able to catalyze, at a lower rate, the dehydrogenation at C3 and C4 of CHdieneCoA to benzoyl-CoA. The polypeptide is Cyclohex-1-ene-1-carbonyl-CoA dehydrogenase (Geobacter metallireducens (strain ATCC 53774 / DSM 7210 / GS-15)).